Here is a 255-residue protein sequence, read N- to C-terminus: Small ribosomal subunit protein uS2 (255 aa).

The interval 233–255 (DFVAEEAASEESLEELAEIVEGK) is disordered.

It belongs to the universal ribosomal protein uS2 family.

The polypeptide is Small ribosomal subunit protein uS2 (Lactococcus lactis subsp. cremoris (strain SK11)).